The sequence spans 208 residues: Pyridoxine/pyridoxamine 5'-phosphate oxidase (208 aa).

FMN is bound by residues 55–60, 70–71, K77, and Q99; these read RMVLLK and YT. K60 contacts substrate. Y117, R121, and S125 together coordinate substrate. FMN is bound by residues 134 to 135 and W180; that span reads QS. 186–188 is a substrate binding site; the sequence is RIH. An FMN-binding site is contributed by R190.

Belongs to the pyridoxamine 5'-phosphate oxidase family. In terms of assembly, homodimer. It depends on FMN as a cofactor.

It catalyses the reaction pyridoxamine 5'-phosphate + O2 + H2O = pyridoxal 5'-phosphate + H2O2 + NH4(+). The enzyme catalyses pyridoxine 5'-phosphate + O2 = pyridoxal 5'-phosphate + H2O2. The protein operates within cofactor metabolism; pyridoxal 5'-phosphate salvage; pyridoxal 5'-phosphate from pyridoxamine 5'-phosphate: step 1/1. It functions in the pathway cofactor metabolism; pyridoxal 5'-phosphate salvage; pyridoxal 5'-phosphate from pyridoxine 5'-phosphate: step 1/1. Its function is as follows. Catalyzes the oxidation of either pyridoxine 5'-phosphate (PNP) or pyridoxamine 5'-phosphate (PMP) into pyridoxal 5'-phosphate (PLP). In Pelagibacter ubique (strain HTCC1062), this protein is Pyridoxine/pyridoxamine 5'-phosphate oxidase.